The chain runs to 356 residues: Probable scoulerine-9-O-methyltransferase OMT2B (356 aa).

Met173 is a binding site for S-adenosyl-L-methionine. Asp176 contributes to the substrate binding site. S-adenosyl-L-methionine contacts are provided by residues Thr177, Gly202, Asp225, 245 to 246 (DI), and Lys259. 260–264 (YVLHN) contacts substrate. The active-site Proton acceptor is His263.

Belongs to the class I-like SAM-binding methyltransferase superfamily. Cation-independent O-methyltransferase family. COMT subfamily.

It carries out the reaction (S)-scoulerine + S-adenosyl-L-methionine = (S)-tetrahydrocolumbamine + S-adenosyl-L-homocysteine + H(+). It participates in alkaloid biosynthesis. Methyltransferase involved in the biosynthesis of the benzylisoquinoline alkaloid noscapine. Catalyzes the conversion of (S)-scoulerine to (S)-tetrahydrocolumbamine. The heterodimers OMT2B-SOMT3 and OMT2B-6OMT do not possess 3-O-acetyl-4'-O-demethylpapaveroxine 4'-O-methyltransferase activity. This is Probable scoulerine-9-O-methyltransferase OMT2B from Papaver somniferum (Opium poppy).